The primary structure comprises 445 residues: MTHSVQPTPLQARKSPALQGRVRVPGDKSISHRALILGALSVGETTITGLLEGEDVLNTAKAMQALGAKVERTGEFAWRVNGVGVGGFAQPDAALDFGNSGTGCRLVMGAVAGCPIAATFDGDASLRSRPMKRIVDPLQLMGASVIASAEGGKLPLTLQGAKNPLPIEYRTPVASAQIKSAVLLAGLSAPGVTTVIEQEASRDHTELMLQHFGAQIVSVPEGVHGRKISLTGQPELRGAPVVVPADPSSAAFPMVAALIVPGSDLVLTDVMTNPLRTGLFATLREMGASIEESELRDDAGEPMATFRVRASKLKGVTVPPERAPSMIDEYLVLAVAAAFAEGTTRMRGLQELRVKESDRLEATAAMLRVNGVDVAIEGDDLIVEGRGHVPGGGLVATHMDHRIAMSALVMGLASDQPVQVDDTAFIATSFPDFIPMMRRLGADFA.

3-phosphoshikimate is bound by residues lysine 28, serine 29, and arginine 33. Position 28 (lysine 28) interacts with phosphoenolpyruvate. Residues glycine 101 and arginine 129 each coordinate phosphoenolpyruvate. Residues serine 175, glutamine 177, aspartate 328, and lysine 355 each contribute to the 3-phosphoshikimate site. Glutamine 177 contacts phosphoenolpyruvate. Aspartate 328 serves as the catalytic Proton acceptor. Residues arginine 359 and arginine 402 each contribute to the phosphoenolpyruvate site.

The protein belongs to the EPSP synthase family. As to quaternary structure, monomer.

The protein resides in the cytoplasm. The catalysed reaction is 3-phosphoshikimate + phosphoenolpyruvate = 5-O-(1-carboxyvinyl)-3-phosphoshikimate + phosphate. Its pathway is metabolic intermediate biosynthesis; chorismate biosynthesis; chorismate from D-erythrose 4-phosphate and phosphoenolpyruvate: step 6/7. Catalyzes the transfer of the enolpyruvyl moiety of phosphoenolpyruvate (PEP) to the 5-hydroxyl of shikimate-3-phosphate (S3P) to produce enolpyruvyl shikimate-3-phosphate and inorganic phosphate. The sequence is that of 3-phosphoshikimate 1-carboxyvinyltransferase from Rhodopseudomonas palustris (strain BisA53).